The following is a 329-amino-acid chain: Segregation and condensation protein B (329 aa).

3 disordered regions span residues 1-39 (MTTG…GPAD), 252-274 (IVEK…SDPA), and 286-329 (SEAA…PKPE).

This sequence belongs to the ScpB family. Homodimer. Homodimerization may be required to stabilize the binding of ScpA to the Smc head domains. Component of the Structural Maintenance of Chromosome (SMC) condensin-like complex composed of ScpA, ScpB and the Smc homodimer. ScpA and ScpB bind to the head domain of Smc, the presence of the three proteins is required for the association of the complex with DNA.

It localises to the cytoplasm. Its function is as follows. A conditionally essential component of the chromosome segregation machinery. Required for chromosome condensation and partitioning. Important for positioning and anchoring of ParB-parS complexes (ori of replication) in the subpolar region, and of the ter replication site, as well as for segration of the ParB-parS complex and thus chromosome segregation. Probably acts via the formation of a condensin-like complex containing Smc, ScpA and ScpB that pulls DNA away from mid-cell into both cell halves. The protein is Segregation and condensation protein B of Myxococcus xanthus (strain DK1622).